A 150-amino-acid polypeptide reads, in one-letter code: Putative transmembrane protein DDB_G0277665 (150 aa).

2 consecutive transmembrane segments (helical) span residues 4 to 24 and 42 to 62; these read TLII…FNIL and VIVG…FLPL.

It is found in the membrane. This chain is Putative transmembrane protein DDB_G0277665, found in Dictyostelium discoideum (Social amoeba).